The sequence spans 156 residues: Cell division protein SepF (156 aa).

It belongs to the SepF family. Homodimer. Interacts with FtsZ.

The protein localises to the cytoplasm. Functionally, cell division protein that is part of the divisome complex and is recruited early to the Z-ring. Probably stimulates Z-ring formation, perhaps through the cross-linking of FtsZ protofilaments. Its function overlaps with FtsA. The sequence is that of Cell division protein SepF from Ruminiclostridium cellulolyticum (strain ATCC 35319 / DSM 5812 / JCM 6584 / H10) (Clostridium cellulolyticum).